The following is a 439-amino-acid chain: Ribosomal protein uS12 methylthiotransferase RimO (439 aa).

The region spanning 2–114 (SKLYLMSLGC…IDEMILKKTN (113 aa)) is the MTTase N-terminal domain. The [4Fe-4S] cluster site is built by Cys-11, Cys-45, Cys-77, Cys-146, Cys-150, and Cys-153. A Radical SAM core domain is found at 132–363 (TGSNSHAFIK…VDEVIEKSFE (232 aa)).

The protein belongs to the methylthiotransferase family. RimO subfamily. [4Fe-4S] cluster serves as cofactor.

It localises to the cytoplasm. It carries out the reaction L-aspartate(89)-[ribosomal protein uS12]-hydrogen + (sulfur carrier)-SH + AH2 + 2 S-adenosyl-L-methionine = 3-methylsulfanyl-L-aspartate(89)-[ribosomal protein uS12]-hydrogen + (sulfur carrier)-H + 5'-deoxyadenosine + L-methionine + A + S-adenosyl-L-homocysteine + 2 H(+). Catalyzes the methylthiolation of an aspartic acid residue of ribosomal protein uS12. The polypeptide is Ribosomal protein uS12 methylthiotransferase RimO (Campylobacter jejuni subsp. jejuni serotype O:6 (strain 81116 / NCTC 11828)).